Reading from the N-terminus, the 248-residue chain is Probable phosphatase VFMJ11_A0091 (248 aa).

9 residues coordinate Zn(2+): H8, H10, H16, H41, E74, H102, H132, D194, and H196.

The protein belongs to the PHP family. The cofactor is Zn(2+).

The chain is Probable phosphatase VFMJ11_A0091 from Aliivibrio fischeri (strain MJ11) (Vibrio fischeri).